Consider the following 311-residue polypeptide: Pyrimidine-specific ribonucleoside hydrolase RihA (311 aa).

H240 is a catalytic residue.

It belongs to the IUNH family. RihA subfamily.

Hydrolyzes cytidine or uridine to ribose and cytosine or uracil, respectively. The sequence is that of Pyrimidine-specific ribonucleoside hydrolase RihA from Salmonella paratyphi B (strain ATCC BAA-1250 / SPB7).